The following is a 456-amino-acid chain: Asparagine--tRNA ligase (456 aa).

Belongs to the class-II aminoacyl-tRNA synthetase family. As to quaternary structure, homodimer.

The protein localises to the cytoplasm. It catalyses the reaction tRNA(Asn) + L-asparagine + ATP = L-asparaginyl-tRNA(Asn) + AMP + diphosphate + H(+). This chain is Asparagine--tRNA ligase, found in Mycoplasmoides gallisepticum (strain R(low / passage 15 / clone 2)) (Mycoplasma gallisepticum).